A 120-amino-acid chain; its full sequence is FK506-binding protein 1B (120 aa).

The segment at 1–24 (MNPPQGVTKTILRPGNGRDSPHTG) is disordered. One can recognise a PPIase FKBP-type domain in the interval 24 to 120 (GDTVIIDYTG…LVLYVCSPAG (97 aa)).

Belongs to the FKBP-type PPIase family. FKBP1 subfamily.

It carries out the reaction [protein]-peptidylproline (omega=180) = [protein]-peptidylproline (omega=0). Functionally, PPIases accelerate the folding of proteins. It catalyzes the cis-trans isomerization of proline imidic peptide bonds in oligopeptides. In Emericella nidulans (strain FGSC A4 / ATCC 38163 / CBS 112.46 / NRRL 194 / M139) (Aspergillus nidulans), this protein is FK506-binding protein 1B (FKBP3).